A 420-amino-acid polypeptide reads, in one-letter code: uncharacterized protein (420 aa).

The YcaO domain maps to 79 to 420; sequence GKGIDNEAAM…AVNTIRGAES (342 aa).

This is an uncharacterized protein from Rhizobium leguminosarum bv. trifolii.